A 218-amino-acid chain; its full sequence is Octanoyltransferase (218 aa).

Positions 31 to 206 constitute a BPL/LPL catalytic domain; that stretch reads EETPDEVWLV…ELVNLLGYEQ (176 aa). Residues 70–77, 137–139, and 150–152 each bind substrate; these read RGGQVTYH, SLG, and GLA. Cys168 functions as the Acyl-thioester intermediate in the catalytic mechanism.

It belongs to the LipB family.

Its subcellular location is the cytoplasm. It carries out the reaction octanoyl-[ACP] + L-lysyl-[protein] = N(6)-octanoyl-L-lysyl-[protein] + holo-[ACP] + H(+). It functions in the pathway protein modification; protein lipoylation via endogenous pathway; protein N(6)-(lipoyl)lysine from octanoyl-[acyl-carrier-protein]: step 1/2. Functionally, catalyzes the transfer of endogenously produced octanoic acid from octanoyl-acyl-carrier-protein onto the lipoyl domains of lipoate-dependent enzymes. Lipoyl-ACP can also act as a substrate although octanoyl-ACP is likely to be the physiological substrate. This is Octanoyltransferase from Vibrio vulnificus (strain CMCP6).